The chain runs to 447 residues: Chitobiosyldiphosphodolichol beta-mannosyltransferase (447 aa).

The Cytoplasmic portion of the chain corresponds to 1–2 (MT). The helical; Signal-anchor for type II membrane protein transmembrane segment at 3 to 23 (LVLLLSIFAICFSSVAFIQLL) threads the bilayer. Over 24–447 (PTRREKKSSE…IAGTFLGLVT (424 aa)) the chain is Lumenal.

Belongs to the glycosyltransferase group 1 family. Glycosyltransferase 33 subfamily.

It is found in the endoplasmic reticulum membrane. It carries out the reaction an N,N'-diacetylchitobiosyl-diphospho-di-trans,poly-cis-dolichol + GDP-alpha-D-mannose = a beta-D-Man-(1-&gt;4)-beta-D-GlcNAc-(1-&gt;4)-alpha-D-GlcNAc-diphospho-di-trans,poly-cis-dolichol + GDP + H(+). It functions in the pathway protein modification; protein glycosylation. Participates in the formation of the lipid-linked precursor oligosaccharide for N-glycosylation. Involved in assembling the dolichol-pyrophosphate-GlcNAc(2)-Man(5) intermediate on the cytoplasmic surface of the ER. This is Chitobiosyldiphosphodolichol beta-mannosyltransferase from Arthroderma benhamiae (strain ATCC MYA-4681 / CBS 112371) (Trichophyton mentagrophytes).